The sequence spans 191 residues: dTTP/UTP pyrophosphatase (191 aa).

D69 (proton acceptor) is an active-site residue.

The protein belongs to the Maf family. YhdE subfamily. It depends on a divalent metal cation as a cofactor.

It localises to the cytoplasm. It carries out the reaction dTTP + H2O = dTMP + diphosphate + H(+). The catalysed reaction is UTP + H2O = UMP + diphosphate + H(+). Functionally, nucleoside triphosphate pyrophosphatase that hydrolyzes dTTP and UTP. May have a dual role in cell division arrest and in preventing the incorporation of modified nucleotides into cellular nucleic acids. In Pelotomaculum thermopropionicum (strain DSM 13744 / JCM 10971 / SI), this protein is dTTP/UTP pyrophosphatase.